The primary structure comprises 1847 residues: Cilia- and flagella-associated protein 65 (1847 aa).

Residues 112–132 (FFTIIPQPIFLSPGITLTLPI) traverse the membrane as a helical segment. The MSP domain occupies 805 to 914 (DLKLDTHKSI…VHYRIRLVGM (110 aa)). A coiled-coil region spans residues 1457–1483 (QRELMRQYHKELQEWNEEKARQEVEFT). The disordered stretch occupies residues 1668–1721 (YEGRKSKEQEEDLFGKMPGGQEDDEEEEEDEEEAEEEEEEIEEEMSKDEEDIDK). The segment covering 1688–1720 (QEDDEEEEEDEEEAEEEEEEIEEEMSKDEEDID) has biased composition (acidic residues).

The protein belongs to the CFAP65 family. Interacts with CFAP47. As to expression, predominantly expressed in testis. Highly expressed in round and elongating spermatids. Expressed also in certain ciliated organs, such as the brain, lung and kidney.

It localises to the cell projection. The protein resides in the cilium. It is found in the flagellum membrane. Its subcellular location is the cytoplasmic vesicle. The protein localises to the secretory vesicle. It localises to the acrosome membrane. The protein resides in the cytoplasm. In terms of biological role, plays a role in flagellar formation and sperm motility. The sequence is that of Cilia- and flagella-associated protein 65 from Mus musculus (Mouse).